We begin with the raw amino-acid sequence, 320 residues long: Heterogeneous nuclear ribonucleoprotein A1 (320 aa).

An N-acetylmethionine modification is found at Met1. An N-acetylserine; in Heterogeneous nuclear ribonucleoprotein A1, N-terminally processed modification is found at Ser2. Ser2 bears the Phosphoserine mark. Residue Lys3 is modified to N6-acetyllysine; alternate. A Glycyl lysine isopeptide (Lys-Gly) (interchain with G-Cter in SUMO2); alternate cross-link involves residue Lys3. Residues Ser4 and Ser6 each carry the phosphoserine modification. Residues 4–94 (SESPKEPEQL…EPKRAVSRED (91 aa)) form a globular A domain region. Lys8 participates in a covalent cross-link: Glycyl lysine isopeptide (Lys-Gly) (interchain with G-Cter in SUMO2). RRM domains follow at residues 14 to 97 (RKLF…DSQR) and 105 to 184 (KKIF…LCKQ). Ser22 carries the post-translational modification Phosphoserine. A Glycyl lysine isopeptide (Lys-Gly) (interchain with G-Cter in SUMO2) cross-link involves residue Lys78. Residues 95–185 (SQRPGAHLTV…EVRKALCKQE (91 aa)) are globular B domain. Lys113 participates in a covalent cross-link: Glycyl lysine isopeptide (Lys-Gly) (interchain with G-Cter in SUMO). Glycyl lysine isopeptide (Lys-Gly) (interchain with G-Cter in SUMO2) cross-links involve residues Lys179 and Lys183. A disordered region spans residues 188–216 (SASSSQRGRSGSGNFGGGRGGGFGGNDNF). Ser192 bears the Phosphoserine; by MKNK2 mark. At Arg194 the chain carries Asymmetric dimethylarginine; alternate. Arg194 bears the Dimethylated arginine; alternate mark. Omega-N-methylarginine; alternate is present on Arg194. The span at 197–216 (SGSGNFGGGRGGGFGGNDNF) shows a compositional bias: gly residues. Ser199 is subject to Phosphoserine. Arg206, Arg218, Arg225, and Arg232 each carry asymmetric dimethylarginine; alternate. Arg206 carries the post-translational modification Dimethylated arginine; alternate. Arg206, Arg218, Arg225, and Arg232 each carry omega-N-methylarginine; alternate. An RNA-binding RGG-box region spans residues 218–240 (RGGNFSGRGGFGGSRGGGGYGGS). Arg225 is subject to Dimethylated arginine; alternate. The interval 268–305 (NQSSNFGPMKGGNFGGRSSGPYGGGGQYFAKPRNQGGY) is nuclear targeting sequence. Residues 271–320 (SNFGPMKGGNFGGRSSGPYGGGGQYFAKPRNQGGYGGSSSSSSYGSGRRF) are disordered. Positions 276 to 294 (MKGGNFGGRSSGPYGGGGQ) are enriched in gly residues. Arg284 bears the Omega-N-methylarginine mark. Ser285 bears the Phosphoserine mark. Residue Lys298 is modified to N6-acetyllysine; alternate. A Glycyl lysine isopeptide (Lys-Gly) (interchain with G-Cter in SUMO2); alternate cross-link involves residue Lys298. The residue at position 300 (Arg300) is an Omega-N-methylarginine. The span at 308–320 (SSSSSSYGSGRRF) shows a compositional bias: low complexity. The residue at position 309 (Ser309) is a Phosphoserine. 3 positions are modified to phosphoserine; by MKNK2: Ser310, Ser311, and Ser312. A phosphoserine mark is found at Ser313 and Ser316. Arg318 carries the omega-N-methylarginine modification.

As to quaternary structure, identified in the spliceosome C complex. Identified in a IGF2BP1-dependent mRNP granule complex containing untranslated mRNAs. Interacts with SEPT6. Interacts with C9orf72. Interacts with KHDRBS1. Interacts with UBQLN2. Interacts with PPIA/CYPA. In terms of processing, sumoylated.

The protein localises to the nucleus. It is found in the cytoplasm. Its function is as follows. Involved in the packaging of pre-mRNA into hnRNP particles, transport of poly(A) mRNA from the nucleus to the cytoplasm and modulation of splice site selection. Plays a role in the splicing of pyruvate kinase PKM by binding repressively to sequences flanking PKM exon 9, inhibiting exon 9 inclusion and resulting in exon 10 inclusion and production of the PKM M2 isoform. Binds to the IRES and thereby inhibits the translation of the apoptosis protease activating factor APAF1. May bind to specific miRNA hairpins. The chain is Heterogeneous nuclear ribonucleoprotein A1 (Hnrnpa1) from Rattus norvegicus (Rat).